Reading from the N-terminus, the 428-residue chain is Glutamyl-tRNA reductase (428 aa).

Substrate-binding positions include 49-52 (TCNR), serine 109, 114-116 (EGQ), and glutamine 120. Cysteine 50 serves as the catalytic Nucleophile. 189–194 (GAGKMS) lines the NADP(+) pocket.

This sequence belongs to the glutamyl-tRNA reductase family. As to quaternary structure, homodimer.

It catalyses the reaction (S)-4-amino-5-oxopentanoate + tRNA(Glu) + NADP(+) = L-glutamyl-tRNA(Glu) + NADPH + H(+). Its pathway is porphyrin-containing compound metabolism; protoporphyrin-IX biosynthesis; 5-aminolevulinate from L-glutamyl-tRNA(Glu): step 1/2. The protein operates within porphyrin-containing compound metabolism; chlorophyll biosynthesis. In terms of biological role, catalyzes the NADPH-dependent reduction of glutamyl-tRNA(Glu) to glutamate 1-semialdehyde (GSA). The protein is Glutamyl-tRNA reductase of Microcystis aeruginosa (strain NIES-843 / IAM M-2473).